The sequence spans 1169 residues: Transcription-repair-coupling factor (1169 aa).

The 162-residue stretch at 634-795 folds into the Helicase ATP-binding domain; it reads DMERERPMDR…MLGVRDLSVI (162 aa). 647–654 lines the ATP pocket; sequence GDVGYGKT. A DEEQ box motif is present at residues 748–751; sequence DEEQ. The 162-residue stretch at 809-970 folds into the Helicase C-terminal domain; that stretch reads VLEQNSNFIK…GFKIAMRDLN (162 aa).

It in the N-terminal section; belongs to the UvrB family. This sequence in the C-terminal section; belongs to the helicase family. RecG subfamily.

The protein localises to the cytoplasm. Couples transcription and DNA repair by recognizing RNA polymerase (RNAP) stalled at DNA lesions. Mediates ATP-dependent release of RNAP and its truncated transcript from the DNA, and recruitment of nucleotide excision repair machinery to the damaged site. The chain is Transcription-repair-coupling factor from Staphylococcus haemolyticus (strain JCSC1435).